Here is a 432-residue protein sequence, read N- to C-terminus: tRNA modification GTPase MnmE (432 aa).

The (6S)-5-formyl-5,6,7,8-tetrahydrofolate site is built by Arg23, Glu85, and Lys124. The region spanning Gly217–Leu362 is the TrmE-type G domain. Asn227 lines the K(+) pocket. GTP contacts are provided by residues Asn227–Ser232, Ser246–Thr252, and Asp271–Gly274. Residue Ser231 coordinates Mg(2+). The K(+) site is built by Ser246, Ile248, and Thr251. Mg(2+) is bound at residue Thr252. Residue Lys432 coordinates (6S)-5-formyl-5,6,7,8-tetrahydrofolate.

It belongs to the TRAFAC class TrmE-Era-EngA-EngB-Septin-like GTPase superfamily. TrmE GTPase family. As to quaternary structure, homodimer. Heterotetramer of two MnmE and two MnmG subunits. The cofactor is K(+).

Its subcellular location is the cytoplasm. Exhibits a very high intrinsic GTPase hydrolysis rate. Involved in the addition of a carboxymethylaminomethyl (cmnm) group at the wobble position (U34) of certain tRNAs, forming tRNA-cmnm(5)s(2)U34. This is tRNA modification GTPase MnmE from Thermus thermophilus (strain ATCC 27634 / DSM 579 / HB8).